Here is a 492-residue protein sequence, read N- to C-terminus: Phytoene desaturase (lycopene-forming) (492 aa).

5–38 contributes to the FAD binding site; it reads VVIGAGFGGLALAIRLQAAGIPTVLLEQRDKPGG.

It belongs to the carotenoid/retinoid oxidoreductase family. Requires FAD as cofactor.

It catalyses the reaction 15-cis-phytoene + 4 A = all-trans-lycopene + 4 AH2. Its pathway is carotenoid biosynthesis; lycopene biosynthesis. Functionally, this enzyme converts phytoene into lycopene via the intermediaries of phytofluene, zeta-carotene and neurosporene by the introduction of four double bonds. This chain is Phytoene desaturase (lycopene-forming) (crtI), found in Pseudescherichia vulneris (Escherichia vulneris).